Consider the following 500-residue polypeptide: MGAAAAAGFFFVLLFLSVQGGAVGYTRSDFPRDFVFGAATSAYQYDGAAAEDGRSPTIWDTFAHEGKTKDKGTGDVAADGYHKYKGDVKLMAETGLEAYKFSISWSRLIPNGRGAVNQEGLKYYNNVIDELAKRGIQPHIMLCHLDLPQALEDEYDGWLSPRIVDDFTAYADVCFREFGDRVLHWTTLAEPNIAALGGYDTGVLSPGHCSDPFGLTECTVGNSTVEPYITAHNMILTHAAVVRLYREKYQALQKGIVGINMFSLWSYPLTNSIADLQAAQRYKDFSYGWILHPLVFGDYPQVMKKTIDSRLPSFSQVQTELIKGAIDFIGINHYYSAYVNYRPLVEGVRDYVADRSVSARVYKTDPPTEKYEPTEYPNDPKGLQLALEYLRESYGDFPFYIEENGKGSTNDSLDDPDRVDYIKGYIGGVLDAIRNGVDVRGYFVWSFVDVYELLEGYQSRSGLYRVDFDDGARPRRARRSARWYSDFLKGKKDPVLIAPQ.

A signal peptide spans 1 to 24; sequence MGAAAAAGFFFVLLFLSVQGGAVG. A beta-D-glucoside-binding residues include Q44 and H144. E190 acts as the Proton donor in catalysis. C209 and C218 are oxidised to a cystine. The N-linked (GlcNAc...) asparagine glycan is linked to N222. A beta-D-glucoside-binding residues include Y334 and E403. Residue E403 is the Nucleophile of the active site. An N-linked (GlcNAc...) asparagine glycan is attached at N410. Position 445 (W445) interacts with a beta-D-glucoside.

The protein belongs to the glycosyl hydrolase 1 family.

The catalysed reaction is Hydrolysis of terminal, non-reducing beta-D-glucosyl residues with release of beta-D-glucose.. This is Beta-glucosidase 2 (BGLU2) from Oryza sativa subsp. japonica (Rice).